A 489-amino-acid chain; its full sequence is Ent-kaurenoic acid oxidase 2 (489 aa).

Residues 5 to 25 traverse the membrane as a helical segment; that stretch reads GLILMWFPLIILGLFVLKWVL. Position 436 (Cys-436) interacts with heme.

It belongs to the cytochrome P450 family. Heme serves as cofactor. Widely expressed. Highly expressed in influorescence stem, influorescence, and silique tissue. Weakly expressed in cauline and rosette leaves. Expressed at a weaker level in stem and influorescence than AtKAO1/CYP88A3.

It is found in the endoplasmic reticulum membrane. The enzyme catalyses ent-kaur-16-en-19-oate + 3 reduced [NADPH--hemoprotein reductase] + 3 O2 = gibberellin A12 + 3 oxidized [NADPH--hemoprotein reductase] + 4 H2O + 4 H(+). It catalyses the reaction ent-kaur-16-en-19-oate + reduced [NADPH--hemoprotein reductase] + O2 = ent-7alpha-hydroxykaur-16-en-19-oate + oxidized [NADPH--hemoprotein reductase] + H2O + H(+). The catalysed reaction is ent-7alpha-hydroxykaur-16-en-19-oate + reduced [NADPH--hemoprotein reductase] + O2 = gibberellin A12 aldehyde + oxidized [NADPH--hemoprotein reductase] + 2 H2O + H(+). It carries out the reaction gibberellin A12 aldehyde + reduced [NADPH--hemoprotein reductase] + O2 = gibberellin A12 + oxidized [NADPH--hemoprotein reductase] + H2O + 2 H(+). Its pathway is plant hormone biosynthesis; gibberellin biosynthesis. Functionally, catalyzes three successive oxidations of ent-kaurenoic acid giving gibberellin 12 (GA12), a key step in gibberellins (GAs) biosynthesis. GAs, which are involved many processes, including stem elongation, play a central role in plant development. This chain is Ent-kaurenoic acid oxidase 2, found in Arabidopsis thaliana (Mouse-ear cress).